Here is a 282-residue protein sequence, read N- to C-terminus: Large ribosomal subunit protein uL2 (282 aa).

Residues 223-282 are disordered; it reads TVRGSVMNPNDHPHGGGEGRAPIGRKSPVTPWGKKALGVKTRNTKKTSEKLIVRKRSNKK.

This sequence belongs to the universal ribosomal protein uL2 family. As to quaternary structure, part of the 50S ribosomal subunit. Forms a bridge to the 30S subunit in the 70S ribosome.

In terms of biological role, one of the primary rRNA binding proteins. Required for association of the 30S and 50S subunits to form the 70S ribosome, for tRNA binding and peptide bond formation. It has been suggested to have peptidyltransferase activity; this is somewhat controversial. Makes several contacts with the 16S rRNA in the 70S ribosome. The protein is Large ribosomal subunit protein uL2 of Mycoplasma mycoides subsp. mycoides SC (strain CCUG 32753 / NCTC 10114 / PG1).